A 151-amino-acid polypeptide reads, in one-letter code: Probable calcium-binding protein CML31 (151 aa).

4 consecutive EF-hand domains span residues 14-42 (ALFATFDHDGDGRISAAELRLCMKTTLGE), 44-79 (VSDEEAGQLVASVDADGDGLLCEAEFVRLVQAAEVE), 84-119 (RRGTGLREAFGMYEMEGEGCITPTSLRRMLRRLGSD), and 120-151 (QDIDDCRAMICRFDLNGDGVLSFDEFKIMMNA). Aspartate 20, aspartate 22, aspartate 24, arginine 26, glutamate 31, aspartate 57, aspartate 59, aspartate 61, and glutamate 68 together coordinate Ca(2+). Positions 133, 135, 137, and 144 each coordinate Ca(2+).

In terms of biological role, potential calcium sensor. This Oryza sativa subsp. japonica (Rice) protein is Probable calcium-binding protein CML31 (CML31).